The following is a 492-amino-acid chain: Probable cytochrome P450 310a1 (492 aa).

Cysteine 428 serves as a coordination point for heme.

It belongs to the cytochrome P450 family. Heme serves as cofactor.

Its subcellular location is the endoplasmic reticulum membrane. It localises to the microsome membrane. Its function is as follows. May be involved in the metabolism of insect hormones and in the breakdown of synthetic insecticides. This is Probable cytochrome P450 310a1 (Cyp310a1) from Drosophila melanogaster (Fruit fly).